Reading from the N-terminus, the 204-residue chain is Protein GrpE (204 aa).

The segment covering 1 to 12 (MSNEEQAQKDDA) has biased composition (basic and acidic residues). The disordered stretch occupies residues 1 to 32 (MSNEEQAQKDDAQPVNEAAIDATAEQADAEVE). The span at 17 to 26 (EAAIDATAEQ) shows a compositional bias: low complexity.

This sequence belongs to the GrpE family. Homodimer.

It localises to the cytoplasm. In terms of biological role, participates actively in the response to hyperosmotic and heat shock by preventing the aggregation of stress-denatured proteins, in association with DnaK and GrpE. It is the nucleotide exchange factor for DnaK and may function as a thermosensor. Unfolded proteins bind initially to DnaJ; upon interaction with the DnaJ-bound protein, DnaK hydrolyzes its bound ATP, resulting in the formation of a stable complex. GrpE releases ADP from DnaK; ATP binding to DnaK triggers the release of the substrate protein, thus completing the reaction cycle. Several rounds of ATP-dependent interactions between DnaJ, DnaK and GrpE are required for fully efficient folding. This chain is Protein GrpE, found in Pseudoalteromonas atlantica (strain T6c / ATCC BAA-1087).